A 249-amino-acid chain; its full sequence is Sugar fermentation stimulation protein homolog (249 aa).

The protein belongs to the SfsA family.

The polypeptide is Sugar fermentation stimulation protein homolog (Synechococcus sp. (strain RCC307)).